A 294-amino-acid polypeptide reads, in one-letter code: Phosphate acetyltransferase (294 aa).

The protein belongs to the phosphate acetyltransferase and butyryltransferase family. As to quaternary structure, homotetramer.

It localises to the cytoplasm. It carries out the reaction acetyl-CoA + phosphate = acetyl phosphate + CoA. The protein operates within metabolic intermediate biosynthesis; acetyl-CoA biosynthesis; acetyl-CoA from acetate: step 2/2. Functionally, in addition to acetyl-CoA (100%), the enzyme accepts propionyl-CoA (60%) and butyryl-CoA (30%). The sequence is that of Phosphate acetyltransferase (pta) from Thermotoga maritima (strain ATCC 43589 / DSM 3109 / JCM 10099 / NBRC 100826 / MSB8).